Consider the following 225-residue polypeptide: Ribosomal RNA small subunit methyltransferase G (225 aa).

Residues Gly-62, 113–114 (AE), and Lys-130 contribute to the S-adenosyl-L-methionine site.

This sequence belongs to the methyltransferase superfamily. RNA methyltransferase RsmG family.

The protein resides in the cytoplasm. Its function is as follows. Specifically methylates the N7 position of a guanine in 16S rRNA. The sequence is that of Ribosomal RNA small subunit methyltransferase G from Petrotoga mobilis (strain DSM 10674 / SJ95).